Reading from the N-terminus, the 390-residue chain is Ribonucleoside-diphosphate reductase subunit M2 (390 aa).

Residue S20 is modified to Phosphoserine. The residue at position 33 (T33) is a Phosphothreonine. A Cy motif is present at residues 49 to 51 (RRI). Positions 139, 170, and 173 each coordinate Fe cation. The active site involves Y177. Residues E233, E267, and H270 each contribute to the Fe cation site.

This sequence belongs to the ribonucleoside diphosphate reductase small chain family. As to quaternary structure, heterodimer of a large and a small subunit. Interacts (via Cy motif and when phosphorylated at Thr-33) with CCNF; the interaction occurs exclusively in G2 and early M. Fe cation serves as cofactor. In terms of processing, phosphorylation on Ser-20 relieves the inhibitory effect on Wnt signaling. Phosphorylated on Thr-33 by CDK1 and CDK2; predominantly in G2 and M phase. Post-translationally, ubiquitinated by the SCF(CCNF) E3 ubiquitin-protein ligase complex; leading to its degradation by the proteasome.

The protein localises to the cytoplasm. It is found in the nucleus. The catalysed reaction is a 2'-deoxyribonucleoside 5'-diphosphate + [thioredoxin]-disulfide + H2O = a ribonucleoside 5'-diphosphate + [thioredoxin]-dithiol. Provides the precursors necessary for DNA synthesis. Catalyzes the biosynthesis of deoxyribonucleotides from the corresponding ribonucleotides. Inhibits Wnt signaling. The chain is Ribonucleoside-diphosphate reductase subunit M2 (Rrm2) from Rattus norvegicus (Rat).